Here is a 530-residue protein sequence, read N- to C-terminus: Phosphoenolpyruvate carboxykinase (ATP) (530 aa).

Substrate-binding residues include arginine 59, tyrosine 198, and lysine 204. ATP-binding positions include lysine 204, histidine 223, and 239 to 247 (GLSGTGKTT). Positions 204 and 223 each coordinate Mn(2+). Aspartate 260 serves as a coordination point for Mn(2+). ATP-binding positions include glutamate 288, arginine 325, 440-441 (RI), and threonine 446. Arginine 325 provides a ligand contact to substrate.

The protein belongs to the phosphoenolpyruvate carboxykinase (ATP) family. Mn(2+) is required as a cofactor.

The protein resides in the cytoplasm. The enzyme catalyses oxaloacetate + ATP = phosphoenolpyruvate + ADP + CO2. It functions in the pathway carbohydrate biosynthesis; gluconeogenesis. Functionally, involved in the gluconeogenesis. Catalyzes the conversion of oxaloacetate (OAA) to phosphoenolpyruvate (PEP) through direct phosphoryl transfer between the nucleoside triphosphate and OAA. The sequence is that of Phosphoenolpyruvate carboxykinase (ATP) from Azobacteroides pseudotrichonymphae genomovar. CFP2.